Reading from the N-terminus, the 332-residue chain is Phosphoribosylformylglycinamidine cyclo-ligase (332 aa).

Belongs to the AIR synthase family.

The protein localises to the cytoplasm. The catalysed reaction is 2-formamido-N(1)-(5-O-phospho-beta-D-ribosyl)acetamidine + ATP = 5-amino-1-(5-phospho-beta-D-ribosyl)imidazole + ADP + phosphate + H(+). It participates in purine metabolism; IMP biosynthesis via de novo pathway; 5-amino-1-(5-phospho-D-ribosyl)imidazole from N(2)-formyl-N(1)-(5-phospho-D-ribosyl)glycinamide: step 2/2. This is Phosphoribosylformylglycinamidine cyclo-ligase from Clostridium acetobutylicum (strain ATCC 824 / DSM 792 / JCM 1419 / IAM 19013 / LMG 5710 / NBRC 13948 / NRRL B-527 / VKM B-1787 / 2291 / W).